Reading from the N-terminus, the 267-residue chain is Putative N-acetylmuramoyl-L-alanine amidase RC0497 (267 aa).

The disordered stretch occupies residues 1 to 25 (MSKSKAIENNGISNTNSPNGKYMAP). Positions 10–19 (NGISNTNSPN) are enriched in polar residues. One can recognise an N-acetylmuramoyl-L-alanine amidase domain in the interval 33 to 141 (TCVVITYSVS…NLDLKHDLVG (109 aa)).

The protein belongs to the N-acetylmuramoyl-L-alanine amidase 2 family.

It is found in the secreted. It carries out the reaction Hydrolyzes the link between N-acetylmuramoyl residues and L-amino acid residues in certain cell-wall glycopeptides.. The protein is Putative N-acetylmuramoyl-L-alanine amidase RC0497 of Rickettsia conorii (strain ATCC VR-613 / Malish 7).